We begin with the raw amino-acid sequence, 125 residues long: Succinate dehydrogenase assembly factor 3, mitochondrial (125 aa).

Residues 1–30 (MTGRHVSRVRSLYRRILQLHRALPPDLKAL) constitute a mitochondrion transit peptide.

The protein belongs to the complex I LYR family. SDHAF3 subfamily. As to quaternary structure, interacts with Sdhb within an Sdha-Sdhb subcomplex.

The protein resides in the mitochondrion matrix. Its function is as follows. Plays an essential role in the assembly of succinate dehydrogenase (SDH), an enzyme complex (also referred to as respiratory complex II) that is a component of both the tricarboxylic acid (TCA) cycle and the mitochondrial electron transport chain, and which couples the oxidation of succinate to fumarate with the reduction of ubiquinone (coenzyme Q) to ubiquinol. Promotes maturation of the iron-sulfur protein subunit Sdhb of the SDH catalytic dimer, protecting it from the deleterious effects of oxidants. May act together with SDHAF1. This is Succinate dehydrogenase assembly factor 3, mitochondrial from Rattus norvegicus (Rat).